The primary structure comprises 260 residues: Snake venom serine protease serpentokallikrein-1 (260 aa).

Residues M1–A18 form the signal peptide. A propeptide spanning residues Q19–L24 is cleaved from the precursor. A Peptidase S1 domain is found at V25–A251. 6 disulfides stabilise this stretch: C31–C165, C52–C68, C102–C258, C144–C212, C176–C191, and C202–C227. H67 (charge relay system) is an active-site residue. N-linked (GlcNAc...) asparagine glycans are attached at residues N81 and N105. Catalysis depends on D112, which acts as the Charge relay system. N156 and N172 each carry an N-linked (GlcNAc...) asparagine glycan. Catalysis depends on S206, which acts as the Charge relay system.

It belongs to the peptidase S1 family. Snake venom subfamily. As to quaternary structure, monomer. In terms of tissue distribution, expressed by the venom gland.

Its subcellular location is the secreted. Snake venom serine protease that may act in the hemostasis system of the prey. The protein is Snake venom serine protease serpentokallikrein-1 of Protobothrops mucrosquamatus (Taiwan habu).